Consider the following 88-residue polypeptide: Phosphocarrier protein HPr (88 aa).

An HPr domain is found at 1-88 (MEQQSYTIID…DVLSKEGLTE (88 aa)). Histidine 15 serves as the catalytic Pros-phosphohistidine intermediate. At serine 46 the chain carries Phosphoserine; by HPrK/P.

It belongs to the HPr family.

The protein localises to the cytoplasm. Phosphorylation on Ser-46 inhibits the phosphoryl transfer from enzyme I to HPr. In terms of biological role, general (non sugar-specific) component of the phosphoenolpyruvate-dependent sugar phosphotransferase system (sugar PTS). This major carbohydrate active-transport system catalyzes the phosphorylation of incoming sugar substrates concomitantly with their translocation across the cell membrane. The phosphoryl group from phosphoenolpyruvate (PEP) is transferred to the phosphoryl carrier protein HPr by enzyme I. Phospho-HPr then transfers it to the PTS EIIA domain. Its function is as follows. P-Ser-HPr interacts with the catabolite control protein A (CcpA), forming a complex that binds to DNA at the catabolite response elements cre, operator sites preceding a large number of catabolite-regulated genes. Thus, P-Ser-HPr is a corepressor in carbon catabolite repression (CCR), a mechanism that allows bacteria to coordinate and optimize the utilization of available carbon sources. P-Ser-HPr also plays a role in inducer exclusion, in which it probably interacts with several non-PTS permeases and inhibits their transport activity. This is Phosphocarrier protein HPr (ptsH) from Staphylococcus carnosus.